Consider the following 330-residue polypeptide: Mas-related G-protein coupled receptor member X2 (330 aa).

Residues 1–33 lie on the Extracellular side of the membrane; the sequence is MDPTTLVWGTESTTMNGNDQALPLLCGKETLIL. A helical transmembrane segment spans residues 34–54; sequence VVLILFIALVGLVGNAFVLWL. Residues 55 to 63 are Cytoplasmic-facing; it reads LGFRMRRNA. A helical membrane pass occupies residues 64-84; the sequence is FSVYVLSLAGADFLFLCFPMI. Residues 85-96 are Extracellular-facing; the sequence is NCLAYLINFFHS. A helical membrane pass occupies residues 97 to 117; that stretch reads ISINFPSFFTTVMTCAYLAGL. The Cytoplasmic segment spans residues 118-144; sequence SMLSAISTERCLSVLWPIWYRSRRPRH. The helical transmembrane segment at 145 to 165 threads the bilayer; the sequence is LSAVMCVLLWALSLLLSILEG. Over 166 to 184 the chain is Extracellular; it reads KFCGFLFSDGDSGWCQTFD. Residues 185–205 form a helical membrane-spanning segment; it reads FITAAWLMFLFVVLCGSSLAL. The Cytoplasmic portion of the chain corresponds to 206-228; that stretch reads LVRILCGSRGLPLTRLYLTILLT. Residues 229-249 form a helical membrane-spanning segment; sequence VLIFLLCGLPFGIQWFLILWI. The Extracellular portion of the chain corresponds to 250–264; that stretch reads WKNSDVLFCHIHPVS. Residues 265 to 285 form a helical membrane-spanning segment; it reads VVLSSFNSSANPIIYFFVGSF. Over 286–330 the chain is Cytoplasmic; the sequence is RKQWRLRQPVLKLALQRALQDTAEVDHSEGCFSQGTLEMSGSSLV.

Belongs to the G-protein coupled receptor 1 family. Mas subfamily.

It localises to the cell membrane. Its function is as follows. Mast cell-specific receptor for basic secretagogues, i.e. cationic amphiphilic drugs, as well as endo- or exogenous peptides, consisting of a basic head group and a hydrophobic core. Recognizes and binds small molecules containing a cyclized tetrahydroisoquinoline (THIQ), such as non-steroidal neuromuscular blocking drugs (NMBDs), including tubocurarine and atracurium. In response to these compounds, mediates pseudo-allergic reactions characterized by histamine release, inflammation and airway contraction. The sequence is that of Mas-related G-protein coupled receptor member X2 (MRGPRX2) from Trachypithecus francoisi (Francois' leaf monkey).